A 369-amino-acid chain; its full sequence is Galactose-1-phosphate uridylyltransferase (369 aa).

Zn(2+) contacts are provided by C54 and C57. UDP-alpha-D-glucose is bound by residues A63 and 79 to 80; that span reads ND. H127 is a binding site for Zn(2+). N172 is a binding site for UDP-alpha-D-glucose. A Zn(2+)-binding site is contributed by H183. H185 acts as the Tele-UMP-histidine intermediate in catalysis. Q187 contacts UDP-alpha-D-glucose. Residues E201, H300, H317, and H319 each contribute to the Fe cation site. Residues 332–335 and 337–338 contribute to the UDP-alpha-D-glucose site; these read KFCV and FE.

This sequence belongs to the galactose-1-phosphate uridylyltransferase type 1 family. Homodimer. Zn(2+) is required as a cofactor.

It carries out the reaction alpha-D-galactose 1-phosphate + UDP-alpha-D-glucose = alpha-D-glucose 1-phosphate + UDP-alpha-D-galactose. It functions in the pathway carbohydrate metabolism; galactose metabolism. In Schizosaccharomyces pombe (strain 972 / ATCC 24843) (Fission yeast), this protein is Galactose-1-phosphate uridylyltransferase (gal7).